The sequence spans 229 residues: PKHD-type hydroxylase OCAR_6723/OCA5_c13470 (229 aa).

The Fe2OG dioxygenase domain occupies 78–180; that stretch reads HIFPPLFNRY…RVASFFWLQS (103 aa). Residues H98, D100, and H161 each contribute to the Fe cation site. A 2-oxoglutarate-binding site is contributed by R171.

Requires Fe(2+) as cofactor. L-ascorbate is required as a cofactor.

In Afipia carboxidovorans (strain ATCC 49405 / DSM 1227 / KCTC 32145 / OM5) (Oligotropha carboxidovorans), this protein is PKHD-type hydroxylase OCAR_6723/OCA5_c13470.